Reading from the N-terminus, the 467-residue chain is Putative vacuolar protein sorting-associated protein TDA6 (467 aa).

Residues 8–28 (ILLWFLIVDLSVIRALVLPPL) form a helical membrane-spanning segment. Asn-61, Asn-124, and Asn-141 each carry an N-linked (GlcNAc...) asparagine glycan.

It belongs to the VPS62 family.

Its subcellular location is the membrane. Functionally, involved in vacuolar protein sorting. The sequence is that of Putative vacuolar protein sorting-associated protein TDA6 (TDA6) from Saccharomyces cerevisiae (strain ATCC 204508 / S288c) (Baker's yeast).